The primary structure comprises 215 residues: Urease accessory protein UreG (215 aa).

24–31 lines the GTP pocket; that stretch reads GPVGSGKT.

It belongs to the SIMIBI class G3E GTPase family. UreG subfamily. Homodimer. UreD, UreF and UreG form a complex that acts as a GTP-hydrolysis-dependent molecular chaperone, activating the urease apoprotein by helping to assemble the nickel containing metallocenter of UreC. The UreE protein probably delivers the nickel.

Its subcellular location is the cytoplasm. In terms of biological role, facilitates the functional incorporation of the urease nickel metallocenter. This process requires GTP hydrolysis, probably effectuated by UreG. This is Urease accessory protein UreG from Burkholderia ambifaria (strain MC40-6).